Here is a 202-residue protein sequence, read N- to C-terminus: Probable GTP-binding protein EngB (202 aa).

The 175-residue stretch at 26 to 200 folds into the EngB-type G domain; sequence VSKEIAFTGS…KAQLDSWFSI (175 aa). GTP contacts are provided by residues 34–41, 61–65, 79–82, 146–149, and 179–181; these read GSSNVGKS, GSTKT, DLPG, NKAD, and FSS. Mg(2+)-binding residues include Ser-41 and Thr-63.

Belongs to the TRAFAC class TrmE-Era-EngA-EngB-Septin-like GTPase superfamily. EngB GTPase family. Requires Mg(2+) as cofactor.

Its function is as follows. Necessary for normal cell division and for the maintenance of normal septation. The chain is Probable GTP-binding protein EngB from Baumannia cicadellinicola subsp. Homalodisca coagulata.